Here is a 138-residue protein sequence, read N- to C-terminus: Putative pre-16S rRNA nuclease (138 aa).

This sequence belongs to the YqgF nuclease family.

It is found in the cytoplasm. Functionally, could be a nuclease involved in processing of the 5'-end of pre-16S rRNA. In Bacteroides thetaiotaomicron (strain ATCC 29148 / DSM 2079 / JCM 5827 / CCUG 10774 / NCTC 10582 / VPI-5482 / E50), this protein is Putative pre-16S rRNA nuclease.